We begin with the raw amino-acid sequence, 520 residues long: Sodium-dependent dicarboxylate transporter SdcS (520 aa).

The next 14 helical transmembrane spans lie at alanine 30–phenylalanine 50, leucine 55–threonine 75, alanine 77–leucine 97, serine 104–methionine 124, serine 160–isoleucine 180, isoleucine 207–isoleucine 227, phenylalanine 242–leucine 262, lysine 298–leucine 318, valine 323–isoleucine 343, glutamate 362–serine 382, glycine 399–valine 419, methionine 428–methionine 448, alanine 452–phenylalanine 472, and leucine 491–isoleucine 511.

Belongs to the SLC13A/DASS transporter (TC 2.A.47) family. NADC subfamily.

The protein localises to the cell membrane. In terms of biological role, mediates the transport of the dicarboxylates fumarate, malate, and succinate across the cytoplasmic membrane via a Na(+)-electrochemical gradient. This Staphylococcus aureus (strain NCTC 8325 / PS 47) protein is Sodium-dependent dicarboxylate transporter SdcS (sdcS).